The chain runs to 57 residues: Large ribosomal subunit protein bL32 (57 aa).

The protein belongs to the bacterial ribosomal protein bL32 family.

This is Large ribosomal subunit protein bL32 from Staphylococcus epidermidis (strain ATCC 35984 / DSM 28319 / BCRC 17069 / CCUG 31568 / BM 3577 / RP62A).